Here is a 226-residue protein sequence, read N- to C-terminus: 7-cyano-7-deazaguanine synthase (226 aa).

10 to 20 provides a ligand contact to ATP; that stretch reads LSGGLDSATAA. The Zn(2+) site is built by Cys191, Cys199, Cys202, and Cys205.

Belongs to the QueC family. Requires Zn(2+) as cofactor.

The catalysed reaction is 7-carboxy-7-deazaguanine + NH4(+) + ATP = 7-cyano-7-deazaguanine + ADP + phosphate + H2O + H(+). Its pathway is purine metabolism; 7-cyano-7-deazaguanine biosynthesis. Catalyzes the ATP-dependent conversion of 7-carboxy-7-deazaguanine (CDG) to 7-cyano-7-deazaguanine (preQ(0)). The polypeptide is 7-cyano-7-deazaguanine synthase (Synechococcus sp. (strain CC9311)).